Here is a 111-residue protein sequence, read N- to C-terminus: Fluoride-specific ion channel FluC 3 (111 aa).

A run of 3 helical transmembrane segments spans residues 26–46, 53–73, and 91–111; these read IPAG…LLTF, VVYL…TFAY, and IFLN…ALML. Residues glycine 63 and threonine 66 each contribute to the Na(+) site.

The protein belongs to the fluoride channel Fluc/FEX (TC 1.A.43) family.

It is found in the cell membrane. The catalysed reaction is fluoride(in) = fluoride(out). With respect to regulation, na(+) is not transported, but it plays an essential structural role and its presence is essential for fluoride channel function. Its function is as follows. Fluoride-specific ion channel. Important for reducing fluoride concentration in the cell, thus reducing its toxicity. The polypeptide is Fluoride-specific ion channel FluC 3 (Methanosarcina acetivorans (strain ATCC 35395 / DSM 2834 / JCM 12185 / C2A)).